The chain runs to 456 residues: ATP synthase subunit beta 1 (456 aa).

An ATP-binding site is contributed by 152–159 (GGAGVGKS).

The protein belongs to the ATPase alpha/beta chains family. As to quaternary structure, F-type ATPases have 2 components, CF(1) - the catalytic core - and CF(0) - the membrane proton channel. CF(1) has five subunits: alpha(3), beta(3), gamma(1), delta(1), epsilon(1). CF(0) has three main subunits: a(1), b(2) and c(9-12). The alpha and beta chains form an alternating ring which encloses part of the gamma chain. CF(1) is attached to CF(0) by a central stalk formed by the gamma and epsilon chains, while a peripheral stalk is formed by the delta and b chains.

It is found in the cell membrane. It carries out the reaction ATP + H2O + 4 H(+)(in) = ADP + phosphate + 5 H(+)(out). Produces ATP from ADP in the presence of a proton gradient across the membrane. The catalytic sites are hosted primarily by the beta subunits. This Listeria monocytogenes serotype 4b (strain F2365) protein is ATP synthase subunit beta 1.